The primary structure comprises 583 residues: Aspartate--tRNA(Asp/Asn) ligase (583 aa).

Glu-173 serves as a coordination point for L-aspartate. The aspartate stretch occupies residues 197–200; the sequence is QMFK. Position 219 (Arg-219) interacts with L-aspartate. ATP contacts are provided by residues 219–221 and Gln-228; that span reads RDE. His-447 lines the L-aspartate pocket. Residue Glu-481 participates in ATP binding. Arg-488 is a binding site for L-aspartate. 533 to 536 is an ATP binding site; the sequence is GLDR.

This sequence belongs to the class-II aminoacyl-tRNA synthetase family. Type 1 subfamily. In terms of assembly, homodimer.

The protein localises to the cytoplasm. The enzyme catalyses tRNA(Asx) + L-aspartate + ATP = L-aspartyl-tRNA(Asx) + AMP + diphosphate. Aspartyl-tRNA synthetase with relaxed tRNA specificity since it is able to aspartylate not only its cognate tRNA(Asp) but also tRNA(Asn). Reaction proceeds in two steps: L-aspartate is first activated by ATP to form Asp-AMP and then transferred to the acceptor end of tRNA(Asp/Asn). This Elusimicrobium minutum (strain Pei191) protein is Aspartate--tRNA(Asp/Asn) ligase.